Here is a 572-residue protein sequence, read N- to C-terminus: Proline--tRNA ligase (572 aa).

The protein belongs to the class-II aminoacyl-tRNA synthetase family. ProS type 1 subfamily. As to quaternary structure, homodimer.

The protein localises to the cytoplasm. It carries out the reaction tRNA(Pro) + L-proline + ATP = L-prolyl-tRNA(Pro) + AMP + diphosphate. Catalyzes the attachment of proline to tRNA(Pro) in a two-step reaction: proline is first activated by ATP to form Pro-AMP and then transferred to the acceptor end of tRNA(Pro). As ProRS can inadvertently accommodate and process non-cognate amino acids such as alanine and cysteine, to avoid such errors it has two additional distinct editing activities against alanine. One activity is designated as 'pretransfer' editing and involves the tRNA(Pro)-independent hydrolysis of activated Ala-AMP. The other activity is designated 'posttransfer' editing and involves deacylation of mischarged Ala-tRNA(Pro). The misacylated Cys-tRNA(Pro) is not edited by ProRS. This Escherichia coli O17:K52:H18 (strain UMN026 / ExPEC) protein is Proline--tRNA ligase.